The following is a 151-amino-acid chain: Putative pre-16S rRNA nuclease (151 aa).

This sequence belongs to the YqgF nuclease family.

It is found in the cytoplasm. Its function is as follows. Could be a nuclease involved in processing of the 5'-end of pre-16S rRNA. This Paraburkholderia phymatum (strain DSM 17167 / CIP 108236 / LMG 21445 / STM815) (Burkholderia phymatum) protein is Putative pre-16S rRNA nuclease.